The primary structure comprises 592 residues: Aspartate--tRNA ligase (592 aa).

Residue glutamate 171 coordinates L-aspartate. The tract at residues 195–198 is aspartate; the sequence is QLFK. Arginine 217 contacts L-aspartate. ATP-binding positions include 217–219 and glutamine 226; that span reads RDE. Histidine 448 lines the L-aspartate pocket. Glutamate 482 is a binding site for ATP. Residue arginine 489 coordinates L-aspartate. 534–537 provides a ligand contact to ATP; it reads GLDR.

The protein belongs to the class-II aminoacyl-tRNA synthetase family. Type 1 subfamily. In terms of assembly, homodimer.

The protein localises to the cytoplasm. It carries out the reaction tRNA(Asp) + L-aspartate + ATP = L-aspartyl-tRNA(Asp) + AMP + diphosphate. Functionally, catalyzes the attachment of L-aspartate to tRNA(Asp) in a two-step reaction: L-aspartate is first activated by ATP to form Asp-AMP and then transferred to the acceptor end of tRNA(Asp). In Vibrio vulnificus (strain YJ016), this protein is Aspartate--tRNA ligase.